Here is a 146-residue protein sequence, read N- to C-terminus: D-aminoacyl-tRNA deacylase (146 aa).

The short motif at 138 to 139 is the Gly-cisPro motif, important for rejection of L-amino acids element; it reads GP.

The protein belongs to the DTD family. In terms of assembly, homodimer.

The protein localises to the cytoplasm. It carries out the reaction glycyl-tRNA(Ala) + H2O = tRNA(Ala) + glycine + H(+). The enzyme catalyses a D-aminoacyl-tRNA + H2O = a tRNA + a D-alpha-amino acid + H(+). Functionally, an aminoacyl-tRNA editing enzyme that deacylates mischarged D-aminoacyl-tRNAs. Also deacylates mischarged glycyl-tRNA(Ala), protecting cells against glycine mischarging by AlaRS. Acts via tRNA-based rather than protein-based catalysis; rejects L-amino acids rather than detecting D-amino acids in the active site. By recycling D-aminoacyl-tRNA to D-amino acids and free tRNA molecules, this enzyme counteracts the toxicity associated with the formation of D-aminoacyl-tRNA entities in vivo and helps enforce protein L-homochirality. This Tolumonas auensis (strain DSM 9187 / NBRC 110442 / TA 4) protein is D-aminoacyl-tRNA deacylase.